We begin with the raw amino-acid sequence, 278 residues long: Probable aquaporin PIP2-8 (278 aa).

Methionine 1 is modified (N-acetylmethionine). Over 1–36 (MSKEVSEEGRHGKDYVDPPPAPLLDMAELKLWSFYR) the chain is Cytoplasmic. Residue lysine 3 is modified to N6,N6-dimethyllysine. A helical transmembrane segment spans residues 37-57 (AIIAEFIATLLFLYVTVATVI). At 58–74 (GHKNQTGPCGGVGLLGI) the chain is on the extracellular side. Residues 75-95 (AWAFGGMIFVLVYCTAGISGG) traverse the membrane as a helical segment. Over 96–116 (HINPAVTFGLFLARKVSLPRA) the chain is Cytoplasmic. The NPA 1 signature appears at 98 to 100 (NPA). The chain crosses the membrane as a helical span at residues 117–137 (VAYMVAQCLGAICGVGLVKAF). The Extracellular portion of the chain corresponds to 138 to 158 (MMTPYKRLGGGANTVADGYST). The chain crosses the membrane as a helical span at residues 159–179 (GTALGAEIIGTFVLVYTVFSA). Residues 180-192 (TDPKRSARDSHVP) are Cytoplasmic-facing. The helical transmembrane segment at 193-213 (VLAPLPIGFAVFMVHLATIPI) threads the bilayer. At 214–240 (TGTGINPARSFGAAVIYNNEKAWDDHW) the chain is on the extracellular side. An NPA 2 motif is present at residues 219-221 (NPA). A helical transmembrane segment spans residues 241-261 (IFWVGPFVGALAAAAYHQYIL). Over 262-278 (RAAAIKALASFRSNPTN) the chain is Cytoplasmic. Phosphoserine occurs at positions 271 and 274.

It belongs to the MIP/aquaporin (TC 1.A.8) family. PIP (TC 1.A.8.11) subfamily. As to expression, expressed in roots and floral buds.

Its subcellular location is the cell membrane. Aquaporins facilitate the transport of water and small neutral solutes across cell membranes. The sequence is that of Probable aquaporin PIP2-8 (PIP2-8) from Arabidopsis thaliana (Mouse-ear cress).